The chain runs to 1482 residues: Cystic fibrosis transmembrane conductance regulator (1482 aa).

At 1 to 77 (MQRSPLEKAS…KLINALRRCF (77 aa)) the chain is on the cytoplasmic side. Residues 78 to 98 (FWRFTFYGIILYLGEVTKAVQ) form a helical membrane-spanning segment. In terms of domain architecture, ABC transmembrane type-1 1 spans 81–365 (FTFYGIILYL…WAVQTWYDSL (285 aa)). Over 99–122 (PLLLGRIIASYDPDNKVERSIAIY) the chain is Extracellular. A helical membrane pass occupies residues 123 to 146 (LAVGLCLLFVVRTLLLHPAIFGLH). The Cytoplasmic portion of the chain corresponds to 147–195 (HIGMQMRIAMFSLIYKKTLKLSSRVLDKISIGQLVSLLSNNLNKFDEGL). Residues 196-216 (ALAHFVWIAPLQVTLLMGLLW) traverse the membrane as a helical segment. Over 217-222 (DLLQAS) the chain is Extracellular. A helical transmembrane segment spans residues 223–243 (AFSGLGVLIILACFQAGFGRM). Residues 244–298 (MMKYRDQRAGKINERLVITSEMIENIQSVKAYCWEEALEKMIENFRQSELRLTRK) are Cytoplasmic-facing. Residues 299-319 (AAYVRYFNSSAFFFSGFFVVF) form a helical membrane-spanning segment. Residues 320 to 339 (LSVLPYALIKGIILRKIFTT) are Extracellular-facing. The chain crosses the membrane as a helical span at residues 340-358 (ISFCIVLRMAVTRQFPWAV). Topologically, residues 359–859 (QTWYDSLGAI…YLRYITVHKR (501 aa)) are cytoplasmic. ATP contacts are provided by residues W401, S434, 458 to 465 (GSTGAGKT), and Q493. One can recognise an ABC transporter 1 domain in the interval 423–646 (NVDNSLFFSN…RPDFSSKLMG (224 aa)). C524 is lipidated: S-palmitoyl cysteine. Phosphoserine occurs at positions 549 and 660. Positions 654–832 (SAERRNSIIT…EEINEEDLKE (179 aa)) are disordered R region. S670 carries the phosphoserine; by PKA modification. Residue S686 is modified to Phosphoserine. K688 participates in a covalent cross-link: Glycyl lysine isopeptide (Lys-Gly) (interchain with G-Cter in ubiquitin). 2 positions are modified to phosphoserine: S700 and S712. The residue at position 717 (T717) is a Phosphothreonine. Phosphoserine occurs at positions 737, 768, 796, and 814. A helical transmembrane segment spans residues 860–880 (LIFVLIWCFVVFLIEVAASLV). The ABC transmembrane type-1 2 domain occupies 860 to 1156 (LIFVLIWCFV…AVNSSIDVDS (297 aa)). The Extracellular portion of the chain corresponds to 881–919 (LLCLLSKVSPEDKGNTTKSANDSSAVIITSTSSFYFLYI). Residues N895 and N901 are each glycosylated (N-linked (GlcNAc...) asparagine). Residues 920–940 (YVGVADTFLALGLFRGLPLVH) traverse the membrane as a discontinuously helical segment. Over 941-991 (TLITVSKILHHKMLHSVLQAPMSTLNTLKAGGILNRFSKDIAILDDLLPLT) the chain is Cytoplasmic. The helical transmembrane segment at 992-1012 (IFDFIQLLLIVIGAVAVVSIL) threads the bilayer. Residues 1013 to 1014 (KP) lie on the Extracellular side of the membrane. A helical membrane pass occupies residues 1015 to 1035 (YIFLATVPVIVAFVLLRAYFL). Topologically, residues 1036 to 1096 (HTSQQLKQLE…TANWFLYLST (61 aa)) are cytoplasmic. The helical transmembrane segment at 1097 to 1117 (LRWFQMRIEMIFVIFFIAVTF) threads the bilayer. At 1118–1131 (ISILTTGEGEGTVG) the chain is on the extracellular side. The helical transmembrane segment at 1132–1152 (IILTLAMNIMSTLQWAVNSSI) threads the bilayer. The Cytoplasmic segment spans residues 1153–1482 (DVDSLMRSVS…TEEEVQDTRL (330 aa)). In terms of domain architecture, ABC transporter 2 spans 1212–1445 (MTVKDLTAKY…KSLFRQAISP (234 aa)). Residues Y1221 and 1246-1253 (GRTGSGKS) each bind ATP. Positions 1388-1482 (RTLKQAFADC…TEEEVQDTRL (95 aa)) are interaction with GORASP2. Residue C1397 is the site of S-palmitoyl cysteine attachment. The residue at position 1446 (S1446) is a Phosphoserine. Residues 1450–1482 (KLFPHQNSGKHKSRSKITALKEETEEEVQDTRL) form a disordered region. Positions 1472–1482 (ETEEEVQDTRL) are enriched in acidic residues. The short motif at 1480-1482 (TRL) is the PDZ-binding element.

This sequence belongs to the ABC transporter superfamily. ABCC family. CFTR transporter (TC 3.A.1.202) subfamily. As to quaternary structure, monomer; does not require oligomerization for channel activity. May form oligomers in the membrane. Interacts with SLC26A3, SLC26A6 and NHERF1. Interacts with SHANK2. Interacts with MYO6. Interacts (via C-terminus) with GOPC (via PDZ domain); this promotes CFTR internalization and thereby decreases channel activity. Interacts with SLC4A7 through NHERF1. Found in a complex with MYO5B and RAB11A. Interacts with ANO1. Interacts with SLC26A8. Interacts with AHCYL1; the interaction increases CFTR activity. Interacts with CSE1L. The core-glycosylated form interacts with GORASP2 (via PDZ GRASP-type 1 domain) in respone to ER stress. Interacts with MARCHF2; the interaction leads to CFTR ubiqtuitination and degradation. Interacts with ADGRG2. In terms of processing, N-glycosylated. Phosphorylated; cAMP treatment promotes phosphorylation and activates the channel. Dephosphorylation decreases the ATPase activity (in vitro). Phosphorylation at PKA sites activates the channel. Phosphorylation at PKC sites enhances the response to phosphorylation by PKA. Phosphorylated by AMPK; this inhibits channel activity. Post-translationally, ubiquitinated, leading to its degradation in the lysosome. Deubiquitination by USP10 in early endosomes enhances its endocytic recycling to the cell membrane. Ubiquitinated by RNF185 during ER stress. Ubiquitinated by MARCHF2.

The protein resides in the apical cell membrane. It is found in the early endosome membrane. The protein localises to the cell membrane. Its subcellular location is the recycling endosome membrane. It localises to the endoplasmic reticulum membrane. The protein resides in the nucleus. It catalyses the reaction ATP + H2O + closed Cl(-) channel = ADP + phosphate + open Cl(-) channel.. It carries out the reaction chloride(in) = chloride(out). The catalysed reaction is hydrogencarbonate(in) = hydrogencarbonate(out). The enzyme catalyses ATP + H2O = ADP + phosphate + H(+). In terms of biological role, epithelial ion channel that plays an important role in the regulation of epithelial ion and water transport and fluid homeostasis. Mediates the transport of chloride ions across the cell membrane. Possesses an intrinsic ATPase activity and utilizes ATP to gate its channel; the passive flow of anions through the channel is gated by cycles of ATP binding and hydrolysis by the ATP-binding domains. The ion channel is also permeable to HCO(3)(-); selectivity depends on the extracellular chloride concentration. Exerts its function also by modulating the activity of other ion channels and transporters. Contributes to the regulation of the pH and the ion content of the epithelial fluid layer. Modulates the activity of the epithelial sodium channel (ENaC) complex, in part by regulating the cell surface expression of the ENaC complex. May regulate bicarbonate secretion and salvage in epithelial cells by regulating the transporter SLC4A7. Can inhibit the chloride channel activity of ANO1. Plays a role in the chloride and bicarbonate homeostasis during sperm epididymal maturation and capacitation. In Dasypus novemcinctus (Nine-banded armadillo), this protein is Cystic fibrosis transmembrane conductance regulator.